The primary structure comprises 409 residues: Multifunctional CCA protein (409 aa).

Residues Gly8 and Arg11 each coordinate ATP. 2 residues coordinate CTP: Gly8 and Arg11. Residues Asp21 and Asp23 each contribute to the Mg(2+) site. ATP is bound by residues Arg91, Arg137, and Arg140. CTP is bound by residues Arg91, Arg137, and Arg140. In terms of domain architecture, HD spans 228–329; that stretch reads SGLHTLSVLE…LELLQSFDVY (102 aa).

Belongs to the tRNA nucleotidyltransferase/poly(A) polymerase family. Bacterial CCA-adding enzyme type 1 subfamily. Monomer. Can also form homodimers and oligomers. Requires Mg(2+) as cofactor. Ni(2+) is required as a cofactor.

It catalyses the reaction a tRNA precursor + 2 CTP + ATP = a tRNA with a 3' CCA end + 3 diphosphate. The enzyme catalyses a tRNA with a 3' CCA end + 2 CTP + ATP = a tRNA with a 3' CCACCA end + 3 diphosphate. Functionally, catalyzes the addition and repair of the essential 3'-terminal CCA sequence in tRNAs without using a nucleic acid template. Adds these three nucleotides in the order of C, C, and A to the tRNA nucleotide-73, using CTP and ATP as substrates and producing inorganic pyrophosphate. tRNA 3'-terminal CCA addition is required both for tRNA processing and repair. Also involved in tRNA surveillance by mediating tandem CCA addition to generate a CCACCA at the 3' terminus of unstable tRNAs. While stable tRNAs receive only 3'-terminal CCA, unstable tRNAs are marked with CCACCA and rapidly degraded. The polypeptide is Multifunctional CCA protein (Pseudomonas fluorescens (strain Pf0-1)).